The following is a 367-amino-acid chain: 2,6-dihydropseudooxynicotine hydrolase (367 aa).

Residues E148, S217, D300, and H329 contribute to the active site.

Belongs to the AB hydrolase superfamily. Homodimer.

The catalysed reaction is 2,6-dihydroxypseudooxynicotine + H2O = 2,6-dihydroxypyridine + 4-(methylamino)butanoate + H(+). It functions in the pathway alkaloid degradation; nicotine degradation; 2,6-dihydroxypyridine and 4-(methylamino)butanoate from 6-hydroxypseudooxynicotine: step 2/2. Functionally, L-nicotine is used as a growth substrate. Plays a role in nicotine catabolism by cleaving a C-C bond in 2,6-dihydroxypseudooxynicotine. The sequence is that of 2,6-dihydropseudooxynicotine hydrolase from Paenarthrobacter nicotinovorans (Arthrobacter nicotinovorans).